A 993-amino-acid chain; its full sequence is Isoleucine--tRNA ligase (993 aa).

A 'HIGH' region motif is present at residues 64–74 (PYANGNIHIGH). Residue Glu621 coordinates L-isoleucyl-5'-AMP. The 'KMSKS' region motif lies at 662-666 (KMSKS). ATP is bound at residue Lys665.

Belongs to the class-I aminoacyl-tRNA synthetase family. IleS type 1 subfamily. Monomer.

The protein localises to the cytoplasm. It catalyses the reaction tRNA(Ile) + L-isoleucine + ATP = L-isoleucyl-tRNA(Ile) + AMP + diphosphate. Catalyzes the attachment of isoleucine to tRNA(Ile). As IleRS can inadvertently accommodate and process structurally similar amino acids such as valine, to avoid such errors it has two additional distinct tRNA(Ile)-dependent editing activities. One activity is designated as 'pretransfer' editing and involves the hydrolysis of activated Val-AMP. The other activity is designated 'posttransfer' editing and involves deacylation of mischarged Val-tRNA(Ile). In Mesorhizobium japonicum (strain LMG 29417 / CECT 9101 / MAFF 303099) (Mesorhizobium loti (strain MAFF 303099)), this protein is Isoleucine--tRNA ligase.